A 508-amino-acid chain; its full sequence is MKLAYWMYAGPAHIGTLRVATSFKNVHAIMHAPLGDDYFNVMRSMLSRERDFTPVTTSVVDRHVLARGSQEKVVENITRKDAEEHPDLIVLTPTCTSSILQEDLENFVERAQLDAKGDVLLADVNHYRVNELQAGDRTLHQIVQYYIEKARKKGELPEGKTAKPSVNIIGISTLGFHNNHDCTELKRLMADLGIEVNAVIPEGASVHELKNLPRAWFNLVPYRELGLMTASYLEKEFGTPCIDIVPMGVVETARCIRKIQEVINAQGADVNYEEYINEQTLYVSQAAWFSRSIDCQNLTGKKAVVFGDNTHAAALTKILSREMGIHVVWAGTYCKYDADWFREQVSEYCDEVLITEDHGEIGDAIARVEPSAIFGTQMERHVGKRLDIPCGVIAAPIHVQNFPIGYKPFLGYEGTNQITDLIYNSFTLGMEDHLLEIFGGHDTKEVITKGISAESDLSWTKDGLAELNKIPGFVRGKVKRNTEKFARDRGFKDISAEVLYAAKEAVGA.

D36 serves as a coordination point for [4Fe-4S] cluster. D294 functions as the Proton donor in the catalytic mechanism. 429–430 serves as a coordination point for substrate; sequence GM.

It belongs to the ChlB/BchB/BchZ family. As to quaternary structure, protochlorophyllide reductase is composed of three subunits; ChlL, ChlN and ChlB. Forms a heterotetramer of two ChlB and two ChlN subunits. The cofactor is [4Fe-4S] cluster.

It catalyses the reaction chlorophyllide a + oxidized 2[4Fe-4S]-[ferredoxin] + 2 ADP + 2 phosphate = protochlorophyllide a + reduced 2[4Fe-4S]-[ferredoxin] + 2 ATP + 2 H2O. It participates in porphyrin-containing compound metabolism; chlorophyll biosynthesis (light-independent). Functionally, component of the dark-operative protochlorophyllide reductase (DPOR) that uses Mg-ATP and reduced ferredoxin to reduce ring D of protochlorophyllide (Pchlide) to form chlorophyllide a (Chlide). This reaction is light-independent. The NB-protein (ChlN-ChlB) is the catalytic component of the complex. The chain is Light-independent protochlorophyllide reductase subunit B from Trichormus variabilis (strain ATCC 29413 / PCC 7937) (Anabaena variabilis).